The following is a 1713-amino-acid chain: MSAKVRLKKLEQLLLDGPWRNESSLSVETLLDVLVCLYTECSHSALRRDKYVAEFLEWAKPFTQLVKDMQLHREDFEIIKVIGRGAFGEVAVVKMKNTERIYAMKILNKWEMLKRAETACFREERDVLVNGDCQWITALHYAFQDENYLYLVMDYYVGGDLLTLLSKFEDKLPEDMARFYIGEMVLAIDSIHQLHYVHRDIKPDNVLLDVNGHIRLADFGSCLKMNDDGTVQSSVAVGTPDYISPEILQAMEDGMGKYGPECDWWSLGVCMYEMLYGETPFYAESLVETYGKIMNHEERFQFPSHVTDVSEEAKDLIQRLICSRERRLGQNGIEDFKKHAFFEGLNWENIRNLEAPYIPDVSSPSDTSNFDVDDDVLRNIEILPPGSHTGFSGLHLPFIGFTFTTESCFSDRGSLKSMIQSNTLTKDEDVQRDLENSLQIEAYERRIRRLEQEKLELSRKLQESTQTVQSLHGSTRALGNSNRDKEIKRLNEELERMKSKMADSNRLERQLEDTVTLRQEHEDSTQRLKGLEKQYRLARQEKEELHKQLVEASERLKSQTKELKDAHQQRKRALQEFSELNERMAELRSQKQKVSRQLRDKEEEMEVAMQKIDSMRQDIRKSEKSRKELEARLEDAVAEASKERKLREHSESFSKQMERELETLKVKQGGRGPGATLEHQQEISKIRSELEKKVLFYEEELVRREASHVLEVKNVKKEVHESESHQLALQKEVLMLKDKLEKSKRERHSEMEEAIGAMKDKYERERAMLFDENKKLTAENEKLCSFVDKLTAQNRQLEDELQDLASKKESVAHWEAQIAEIIQWVSDEKDARGYLQALASKMTEELETLRSSSLGSRTLDPLWKVRRSQKLDMSARLELQSALEAEIRAKQLVHEELRKVKDTSLAFESKLKESEAKNRELLEEMQSLKKRMEEKFRADTGLKLPDFQDPIFEYFNTAPLAHDLTFRTSSASDQETQASKLDLSPSVSVATSTEQQEDAARSQQRPSTVPLPNTQALAMAGPKPKAHQFSIKSFPSPTQCSHCTSLMVGLIRQGYACEVCAFSCHVSCKDSAPQVCPIPPEQSKRPLGVDVQRGIGTAYKGYVKVPKPTGVKKGWQRAYAVVCDCKLFLYDLPEGKSTQPGVIASQVLDLRDDEFAVSSVLASDVIHATRRDIPCIFRVTASLLGSPSKTSSLLILTENENEKRKWVGILEGLQAILHKNRLRSQVVHVAQEAYDSSLPLIKTVLAAAIVDGDRIAVGLEEGLYVIELTRDVIVRAADCKKVYQIELAPKEKLILLLCGRNHHVHLYPWTSFDGAEASNFDIKLPETKGCQLIATGTLRKSSSTCLFVAVKRLVLCYEIQRTKPFHRKFNEIVAPGHVQWMAMFKDRLCVGYPSGFSLLSIQGDGQPLDLVNPADPSLAFLSQQSFDALCAVELKSEEYLLCFSHMGLYVDPQGRRSRTQELMWPAAPVACSCSSSHVTVYSEYGVDVFDVRTMEWVQTIGLRRIRPLNSDGSLNLLGCEPPRLIYFKNKFSGTVLNVPDTSDNSKKQMLRTRSKRRFVFKVPEEERLQQRREMLRDPELRSKMISNPTNFNHVAHMGPGDGMQVLMDLPLSAAPTAQEEKQGPAPTGLPRQLPSRNKPYVSWPSSGGSEPGVPVPLRSMSDPDQDFDKEPDSDSTKHSTPSNSSNPSGPPSPNSPHRSQLPLEGLDQPACDA.

The region spanning 76 to 342 (FEIIKVIGRG…IEDFKKHAFF (267 aa)) is the Protein kinase domain. Residues 82–90 (IGRGAFGEV) and Lys-105 contribute to the ATP site. Asp-200 serves as the catalytic Proton acceptor. A phosphoserine; by autocatalysis mark is found at Ser-221 and Ser-233. Thr-239 is subject to Phosphothreonine; by autocatalysis. Residues 343-413 (EGLNWENIRN…TTESCFSDRG (71 aa)) form the AGC-kinase C-terminal domain. At Thr-423 the chain carries Phosphothreonine. Residues 434 to 649 (LENSLQIEAY…ASKERKLREH (216 aa)) adopt a coiled-coil conformation. Positions 461–485 (LQESTQTVQSLHGSTRALGNSNRDK) are disordered. Residues 463 to 481 (ESTQTVQSLHGSTRALGNS) are compositionally biased toward polar residues. Arg-671 carries the omega-N-methylarginine modification. Coiled-coil stretches lie at residues 681 to 815 (QEIS…AHWE) and 882 to 939 (ALEA…FRAD). Position 927 is a phosphoserine (Ser-927). A Phosphotyrosine modification is found at Tyr-954. Composition is skewed to polar residues over residues 971–994 (ASDQETQASKLDLSPSVSVATSTE) and 1001–1014 (RSQQRPSTVPLPNT). Positions 971-1014 (ASDQETQASKLDLSPSVSVATSTEQQEDAARSQQRPSTVPLPNT) are disordered. Residues 1026–1076 (AHQFSIKSFPSPTQCSHCTSLMVGLIRQGYACEVCAFSCHVSCKDSAPQVC) form a Phorbol-ester/DAG-type zinc finger. One can recognise a PH domain in the interval 1096–1215 (GTAYKGYVKV…WVGILEGLQA (120 aa)). One can recognise a CNH domain in the interval 1241 to 1515 (IKTVLAAAIV…RPLNSDGSLN (275 aa)). In terms of domain architecture, CRIB spans 1585-1598 (ISNPTNFNHVAHMG). A disordered region spans residues 1615–1713 (PTAQEEKQGP…EGLDQPACDA (99 aa)). A compositionally biased stretch (basic and acidic residues) spans 1666–1677 (DFDKEPDSDSTK). A phosphoserine mark is found at Ser-1682, Ser-1684, Ser-1688, Ser-1692, and Ser-1695.

It belongs to the protein kinase superfamily. AGC Ser/Thr protein kinase family. DMPK subfamily. As to quaternary structure, homodimer and homotetramer via the coiled coil regions. Interacts tightly with GTP-bound but not GDP-bound CDC42. Interacts with TJP1; this interaction requires the presence of catalytically active CDC42. Forms a tripartite complex with MYO18A and LURAP1 with the latter acting as an adapter connecting CDC42BPB and MYO18A. LURAP1 binding results in activation of CDC42BPB by abolition of its negative autoregulation. Interacts with STRIP1, STRN3 and SIKE1. Interacts with CPNE4 (via VWFA domain). Interacts with LURAP1. Interacts (via AGC-kinase C-terminal domain) with FAM89B/LRAP25 (via LRR repeat). Forms a tripartite complex with FAM89B/LRAP25 and LIMK1. The cofactor is Mg(2+). In terms of processing, proteolytically cleaved by caspases upon apoptosis induction. Expressed in all tissues examined with highest levels in lung and kidney.

It localises to the cytoplasm. Its subcellular location is the cell membrane. It is found in the cell junction. The protein resides in the cell projection. The protein localises to the lamellipodium. The catalysed reaction is L-seryl-[protein] + ATP = O-phospho-L-seryl-[protein] + ADP + H(+). It catalyses the reaction L-threonyl-[protein] + ATP = O-phospho-L-threonyl-[protein] + ADP + H(+). Its activity is regulated as follows. Maintained in an inactive, closed conformation by an interaction between the kinase domain and the negative autoregulatory C-terminal coiled-coil region. Agonist binding to the phorbol ester binding site disrupts this, releasing the kinase domain to allow N-terminus-mediated dimerization and kinase activation by transautophosphorylation. Inhibited by chelerythrine chloride. Serine/threonine-protein kinase which is an important downstream effector of CDC42 and plays a role in the regulation of cytoskeleton reorganization and cell migration. Regulates actin cytoskeletal reorganization via phosphorylation of PPP1R12C and MYL9/MLC2. In concert with MYO18A and LURAP1, is involved in modulating lamellar actomyosin retrograde flow that is crucial to cell protrusion and migration. Phosphorylates PPP1R12A. In concert with FAM89B/LRAP25 mediates the targeting of LIMK1 to the lamellipodium resulting in its activation and subsequent phosphorylation of CFL1 which is important for lamellipodial F-actin regulation. This is Serine/threonine-protein kinase MRCK beta from Rattus norvegicus (Rat).